A 261-amino-acid chain; its full sequence is Cytochrome c oxidase subunit 3 (261 aa).

Topologically, residues 1-15 (MTHQTHAYHMVNPSP) are mitochondrial matrix. The helical transmembrane segment at 16–34 (WPLTGALSALLMTSGLIMW) threads the bilayer. Topologically, residues 35 to 40 (FHFNST) are mitochondrial intermembrane. The helical transmembrane segment at 41-66 (ALLMLGLTTNMLTMYQWWRDIIREST) threads the bilayer. Over 67-72 (FQGHHT) the chain is Mitochondrial matrix. The helical transmembrane segment at 73–105 (PVVQKGLRYGMILFIISEVLFFTGFFWAFYHSS) threads the bilayer. Topologically, residues 106-128 (LAPTPELGGCWPPTGINPLNPLE) are mitochondrial intermembrane. Residues 129-152 (VPLLNTSVLLASGVSITWAHHSLM) form a helical membrane-spanning segment. Topologically, residues 153-155 (EGN) are mitochondrial matrix. A helical membrane pass occupies residues 156–183 (RSHMLQALFITITLGVYFTLLQASEYYE). The Mitochondrial intermembrane portion of the chain corresponds to 184 to 190 (APFTISD). Residues 191–223 (GVYGSTFFVATGFHGLHVIIGSTFLIVCFFRQL) traverse the membrane as a helical segment. Residues 224-232 (KFHFTSNHH) lie on the Mitochondrial matrix side of the membrane. The helical transmembrane segment at 233 to 256 (FGFEAAAWYWHFVDVVWLFLYVSI) threads the bilayer. Topologically, residues 257–261 (YWWGS) are mitochondrial intermembrane.

It belongs to the cytochrome c oxidase subunit 3 family. In terms of assembly, component of the cytochrome c oxidase (complex IV, CIV), a multisubunit enzyme composed of 14 subunits. The complex is composed of a catalytic core of 3 subunits MT-CO1, MT-CO2 and MT-CO3, encoded in the mitochondrial DNA, and 11 supernumerary subunits COX4I, COX5A, COX5B, COX6A, COX6B, COX6C, COX7A, COX7B, COX7C, COX8 and NDUFA4, which are encoded in the nuclear genome. The complex exists as a monomer or a dimer and forms supercomplexes (SCs) in the inner mitochondrial membrane with NADH-ubiquinone oxidoreductase (complex I, CI) and ubiquinol-cytochrome c oxidoreductase (cytochrome b-c1 complex, complex III, CIII), resulting in different assemblies (supercomplex SCI(1)III(2)IV(1) and megacomplex MCI(2)III(2)IV(2)).

The protein resides in the mitochondrion inner membrane. The enzyme catalyses 4 Fe(II)-[cytochrome c] + O2 + 8 H(+)(in) = 4 Fe(III)-[cytochrome c] + 2 H2O + 4 H(+)(out). Functionally, component of the cytochrome c oxidase, the last enzyme in the mitochondrial electron transport chain which drives oxidative phosphorylation. The respiratory chain contains 3 multisubunit complexes succinate dehydrogenase (complex II, CII), ubiquinol-cytochrome c oxidoreductase (cytochrome b-c1 complex, complex III, CIII) and cytochrome c oxidase (complex IV, CIV), that cooperate to transfer electrons derived from NADH and succinate to molecular oxygen, creating an electrochemical gradient over the inner membrane that drives transmembrane transport and the ATP synthase. Cytochrome c oxidase is the component of the respiratory chain that catalyzes the reduction of oxygen to water. Electrons originating from reduced cytochrome c in the intermembrane space (IMS) are transferred via the dinuclear copper A center (CU(A)) of subunit 2 and heme A of subunit 1 to the active site in subunit 1, a binuclear center (BNC) formed by heme A3 and copper B (CU(B)). The BNC reduces molecular oxygen to 2 water molecules using 4 electrons from cytochrome c in the IMS and 4 protons from the mitochondrial matrix. The polypeptide is Cytochrome c oxidase subunit 3 (MT-CO3) (Syncerus caffer (African buffalo)).